A 183-amino-acid polypeptide reads, in one-letter code: MEESQQQSSKFDAPPSPYVPSRVYLAQIYWKKPAIVVLRVLQFIFSLIAFSVMADVLHDVQGSIKSLSYTVAIGVLACAYALAQLSFSLWCVIRGATSSAGVTPLYQYATFICDQMSTYFLISAASATATLIDVSGVCGSNGSGTNLCSRSTASVTFAFLAFLAFSASSVLTGYYLVKCILKA.

Topologically, residues 1–33 (MEESQQQSSKFDAPPSPYVPSRVYLAQIYWKKP) are cytoplasmic. The helical transmembrane segment at 34 to 54 (AIVVLRVLQFIFSLIAFSVMA) threads the bilayer. Residues 55-72 (DVLHDVQGSIKSLSYTVA) lie on the Extracellular side of the membrane. Residues 73 to 93 (IGVLACAYALAQLSFSLWCVI) form a helical membrane-spanning segment. Topologically, residues 94-118 (RGATSSAGVTPLYQYATFICDQMST) are cytoplasmic. A helical membrane pass occupies residues 119–139 (YFLISAASATATLIDVSGVCG). At 140–156 (SNGSGTNLCSRSTASVT) the chain is on the extracellular side. Asn-141 carries an N-linked (GlcNAc...) asparagine glycan. The helical transmembrane segment at 157–177 (FAFLAFLAFSASSVLTGYYLV) threads the bilayer. Topologically, residues 178 to 183 (KCILKA) are cytoplasmic.

Belongs to the Casparian strip membrane proteins (CASP) family. As to quaternary structure, homodimer and heterodimers.

It localises to the cell membrane. This chain is CASP-like protein UU2, found in Selaginella moellendorffii (Spikemoss).